The following is a 587-amino-acid chain: Protein NRT1/ PTR FAMILY 2.9 (587 aa).

12 helical membrane-spanning segments follow: residues 35 to 55 (FEKLGIVGSSSNLVIYLTTVF), 65 to 85 (VVNIYGGTSNFGTIVAAFLCD), 94 to 114 (LSFAMIACFLGSVAMDLTAVI), 135 to 155 (IGQIMFLAGAMVLLVIGAGGI), 181 to 201 (FFNWYFFTFTFAQMVSLTLIV), 209 to 229 (WSIGLAIPAILMLLGCIIFFA), 325 to 345 (CVIRVLPVWLSAALFYLAYIQ), 368 to 388 (IPAGSYTVFLMLGMTIFIPIY), 412 to 432 (VGAGLFLCITSMMVSAIVEQY), 457 to 477 (GMWLIPQLVLMGIADALAGVG), 493 to 513 (FAGSLYYCGIGLASYLSTFLL), and 540 to 560 (YFYFLVAGMMTLNLAYFLLVS).

Belongs to the major facilitator superfamily. Proton-dependent oligopeptide transporter (POT/PTR) (TC 2.A.17) family. Expressed in roots, stems and major veins of the leaves. Detected in the companion cells of the root phloem.

It localises to the cell membrane. Its function is as follows. Low-affinity nitrate transporter facilitating nitrate loading into root phloem. Not involved in dipeptides transport, but has a weak glucosinolate transport activity. This chain is Protein NRT1/ PTR FAMILY 2.9 (NPF2.9), found in Arabidopsis thaliana (Mouse-ear cress).